The chain runs to 650 residues: MAQQTQVTEEQARALAEESRESGWDKPSFAKELFLGRFPLGLIHPFPKPSDAEEARTEAFLVKLREFLDTVDGSVIERAAQIPDEYVKGLAELGCFGLKIPSEYGGLNMSQVAYNRVLMMVTTVHSSLGALLSAHQSIGVPEPLKLAGTAEQKRRFLPRCAAGAISAFLLTEPDVGSDPARMASTATPIDDGQAYELEGVKLWTTNGVVADLLVVMARVPRSEGHRGGISAFVVEADSPGITVERRNKFMGLRGIENGVTRLHRVRVPKDNLIGREGDGLKIALTTLNAGRLSLPAIATGVAKQALKIAREWSVERVQWGKPVGQHEAVASKISFIAATNYALDAVVELSSQMADEGRNDIRIEAALAKLWSSEMACLVGDELLQIRGGRGYETAESLAARGERAVPVEQMVRDLRINRIFEGSSEIMRLLIAREAVDAHLTAAGDLANPKADLRQKAAAAAGASGFYAKWLPKLVFGEGQLPTTYREFGALATHLRFVERSSRKLARNTFYGMARWQASLEKKQGFLGRIVDIGAELFAISAACVRAEAQRTADPVEGEQAYELAEAFCQQATLRVEALFDALWSNTDSIDVRLANDVLEGRYTWLEQGILDQSEGTGPWIASWEPGPSTEANLARRFLTVSPSSEAKL.

Positions 1 to 23 (MAQQTQVTEEQARALAEESRESG) are disordered. Residues 10 to 23 (EQARALAEESRESG) show a composition bias toward basic and acidic residues. E422 functions as the Proton acceptor in the catalytic mechanism.

The protein belongs to the acyl-CoA dehydrogenase family. FAD serves as cofactor.

The enzyme catalyses a 2,3-saturated acyl-CoA + A = a 2,3-dehydroacyl-CoA + AH2. In Mycobacterium tuberculosis (strain CDC 1551 / Oshkosh), this protein is Probable acyl-CoA dehydrogenase FadE10 (fadE10).